We begin with the raw amino-acid sequence, 487 residues long: GTPase Der (487 aa).

2 consecutive EngA-type G domains span residues 3-166 (PVVA…AEAM) and 199-372 (IKLA…DSAT). Residues 9–16 (GRPNVGKS), 56–60 (DTGGI), 118–121 (NKID), 205–212 (GKPNVGKS), 252–256 (DTAGV), and 317–320 (NKWD) each bind GTP. The KH-like domain occupies 373-457 (RRVSTSMLTR…PIQLRFQEGD (85 aa)).

It belongs to the TRAFAC class TrmE-Era-EngA-EngB-Septin-like GTPase superfamily. EngA (Der) GTPase family. In terms of assembly, associates with the 50S ribosomal subunit.

Functionally, GTPase that plays an essential role in the late steps of ribosome biogenesis. The sequence is that of GTPase Der from Shewanella oneidensis (strain ATCC 700550 / JCM 31522 / CIP 106686 / LMG 19005 / NCIMB 14063 / MR-1).